The following is a 205-amino-acid chain: Large ribosomal subunit protein uL3 (205 aa).

The protein belongs to the universal ribosomal protein uL3 family. Part of the 50S ribosomal subunit. Forms a cluster with proteins L14 and L19.

One of the primary rRNA binding proteins, it binds directly near the 3'-end of the 23S rRNA, where it nucleates assembly of the 50S subunit. The chain is Large ribosomal subunit protein uL3 from Bacteroides thetaiotaomicron (strain ATCC 29148 / DSM 2079 / JCM 5827 / CCUG 10774 / NCTC 10582 / VPI-5482 / E50).